A 717-amino-acid polypeptide reads, in one-letter code: Ubinuclein-2 (717 aa).

Disordered stretches follow at residues lysine 114–serine 136, leucine 166–serine 308, and alanine 620–serine 717. Acidic residues predominate over residues aspartate 118–serine 136. Composition is skewed to polar residues over residues glutamine 214 to aspartate 246 and serine 285 to serine 308. The span at serine 623–glutamate 632 shows a compositional bias: basic and acidic residues. The Nuclear localization signal motif lies at leucine 634–serine 641. Residues lysine 653–alanine 665 are compositionally biased toward basic and acidic residues. Residues arginine 675 to alanine 705 show a composition bias toward basic residues. Residues lysine 706–serine 717 are compositionally biased toward polar residues.

It belongs to the ubinuclein family. In terms of assembly, component of the HIRA complex made of UBN1, UBN2, ASF1A, CABIN1 and HIRA. Interacts with HIRA.

It localises to the nucleus. The protein localises to the nucleolus. Its function is as follows. May be required for replication-independent chromatin assembly. The sequence is that of Ubinuclein-2 from Arabidopsis thaliana (Mouse-ear cress).